A 231-amino-acid chain; its full sequence is Nucleoside diphosphate kinase II, chloroplastic (231 aa).

A chloroplast-targeting transit peptide spans 1–62 (MVGATVVSKW…RNSASRRRLR (62 aa)). Lys91, Phe139, Arg167, Thr173, Arg184, and Asn194 together coordinate ATP. The active-site Pros-phosphohistidine intermediate is His197.

The protein belongs to the NDK family. As to quaternary structure, interacts with PHYA, MPK3 and MPK6. It depends on Mg(2+) as a cofactor. In terms of processing, autophosphorylated.

Its subcellular location is the plastid. It is found in the chloroplast. It catalyses the reaction a 2'-deoxyribonucleoside 5'-diphosphate + ATP = a 2'-deoxyribonucleoside 5'-triphosphate + ADP. It carries out the reaction a ribonucleoside 5'-diphosphate + ATP = a ribonucleoside 5'-triphosphate + ADP. Its function is as follows. Major role in the synthesis of nucleoside triphosphates other than ATP. The ATP gamma phosphate is transferred to the NDP beta phosphate via a ping-pong mechanism, using a phosphorylated active-site intermediate. May activate MPK3 and MPK6. May be involved in the regulation of cellular redox state and hydrogen peroxide-mediated MAP kinase signaling. This Arabidopsis thaliana (Mouse-ear cress) protein is Nucleoside diphosphate kinase II, chloroplastic (NDPK2).